The following is a 383-amino-acid chain: S-adenosylmethionine synthase (383 aa).

Residue H15 participates in ATP binding. D17 is a Mg(2+) binding site. Position 43 (E43) interacts with K(+). Positions 56 and 99 each coordinate L-methionine. Residues 99 to 109 (QSPDINQGVDR) form a flexible loop region. ATP-binding positions include 164 to 166 (DAK), 230 to 231 (RF), D239, 245 to 246 (RK), A262, and K266. D239 is a binding site for L-methionine. K270 provides a ligand contact to L-methionine.

This sequence belongs to the AdoMet synthase family. Homotetramer; dimer of dimers. Mg(2+) serves as cofactor. It depends on K(+) as a cofactor.

It is found in the cytoplasm. The enzyme catalyses L-methionine + ATP + H2O = S-adenosyl-L-methionine + phosphate + diphosphate. The protein operates within amino-acid biosynthesis; S-adenosyl-L-methionine biosynthesis; S-adenosyl-L-methionine from L-methionine: step 1/1. Functionally, catalyzes the formation of S-adenosylmethionine (AdoMet) from methionine and ATP. The overall synthetic reaction is composed of two sequential steps, AdoMet formation and the subsequent tripolyphosphate hydrolysis which occurs prior to release of AdoMet from the enzyme. The polypeptide is S-adenosylmethionine synthase (Pseudoalteromonas translucida (strain TAC 125)).